The chain runs to 777 residues: Serine/threonine-protein kinase PLK4 (777 aa).

The 255-residue stretch at 14–268 folds into the Protein kinase domain; sequence YEVQHLLGKG…LEQVLRHPFL (255 aa). Residues 20–28 and lysine 43 contribute to the ATP site; that span reads LGKGGFASV. Aspartate 139 (proton acceptor) is an active-site residue. Positions 371–381 are enriched in polar residues; it reads TNNLAPFTSDS. Residues 371–390 are disordered; the sequence is TNNLAPFTSDSDMIPSPVGE. Residues 390–507 enclose the Cryptic POLO box 1 (CPB1) domain; sequence EKRLLMPPLE…ARFVGLVKSK (118 aa). A Cryptic POLO box 2 (CPB2) domain is found at 508-611; that stretch reads TPKITFFSSL…GRRPAADMHA (104 aa). The 80-residue stretch at 669–748 folds into the POLO box domain; the sequence is PIKRITVPEI…MPQLQMKLKC (80 aa).

This sequence belongs to the protein kinase superfamily. Ser/Thr protein kinase family. CDC5/Polo subfamily. As to quaternary structure, homodimer. Ubiquitinated by the SCF(Slimb) ubiquitin ligase complex; leading to its degradation by the proteasome during interphase and regulating centriole number and ensuring the block to centriole reduplication.

It localises to the cytoplasm. The protein resides in the cytoskeleton. The protein localises to the microtubule organizing center. It is found in the centrosome. Its subcellular location is the centriole. It catalyses the reaction L-seryl-[protein] + ATP = O-phospho-L-seryl-[protein] + ADP + H(+). The catalysed reaction is L-threonyl-[protein] + ATP = O-phospho-L-threonyl-[protein] + ADP + H(+). Serine/threonine-protein kinase that plays a central role in centriole duplication. Able to trigger procentriole formation on the surface of the mother centriole cylinder, using mother centriole as a platform, leading to the recruitment of centriole biogenesis proteins such as sas-6. When overexpressed, it is able to induce centrosome amplification through the simultaneous generation of multiple procentrioles adjoining each parental centriole during S phase. Centrosome amplification following overexpression can initiate tumorigenesis, highlighting the importance of centrosome regulation in cancers. This chain is Serine/threonine-protein kinase PLK4 (SAK), found in Drosophila pseudoobscura pseudoobscura (Fruit fly).